Reading from the N-terminus, the 137-residue chain is Competence protein D (137 aa).

Functionally, involved in transformation (genetic competence for DNA uptake). This is Competence protein D (comD) from Haemophilus influenzae (strain ATCC 51907 / DSM 11121 / KW20 / Rd).